The following is a 431-amino-acid chain: tRNA(Ile)-lysidine synthase (431 aa).

Serine 19 to serine 24 is a binding site for ATP.

Belongs to the tRNA(Ile)-lysidine synthase family.

The protein localises to the cytoplasm. The catalysed reaction is cytidine(34) in tRNA(Ile2) + L-lysine + ATP = lysidine(34) in tRNA(Ile2) + AMP + diphosphate + H(+). In terms of biological role, ligates lysine onto the cytidine present at position 34 of the AUA codon-specific tRNA(Ile) that contains the anticodon CAU, in an ATP-dependent manner. Cytidine is converted to lysidine, thus changing the amino acid specificity of the tRNA from methionine to isoleucine. This is tRNA(Ile)-lysidine synthase from Staphylococcus aureus (strain COL).